The sequence spans 158 residues: Ribonuclease H (158 aa).

The RNase H type-1 domain occupies 3–144; sequence GLKQLLIFTD…CDTLAREAAE (142 aa). Positions 12, 50, 72, and 136 each coordinate Mg(2+).

The protein belongs to the RNase H family. Monomer. Mg(2+) is required as a cofactor.

Its subcellular location is the cytoplasm. The catalysed reaction is Endonucleolytic cleavage to 5'-phosphomonoester.. In terms of biological role, endonuclease that specifically degrades the RNA of RNA-DNA hybrids. In Shewanella loihica (strain ATCC BAA-1088 / PV-4), this protein is Ribonuclease H.